The following is a 267-amino-acid chain: Type II pantothenate kinase (267 aa).

6 to 13 (DAGGTLIK) is an ATP binding site. Glu70 (proton acceptor) is an active-site residue. Residues Thr99, 121–125 (GGMIQ), Tyr137, and Ser225 contribute to the ATP site.

The protein belongs to the type II pantothenate kinase family. In terms of assembly, homodimer.

The protein localises to the cytoplasm. The catalysed reaction is (R)-pantothenate + ATP = (R)-4'-phosphopantothenate + ADP + H(+). The protein operates within cofactor biosynthesis; coenzyme A biosynthesis; CoA from (R)-pantothenate: step 1/5. Functionally, catalyzes the phosphorylation of pantothenate (Pan), the first step in CoA biosynthesis. This is Type II pantothenate kinase from Staphylococcus aureus (strain USA300).